Here is a 472-residue protein sequence, read N- to C-terminus: 3-isopropylmalate dehydratase large subunit (472 aa).

Positions 353, 414, and 417 each coordinate [4Fe-4S] cluster.

Belongs to the aconitase/IPM isomerase family. LeuC type 1 subfamily. Heterodimer of LeuC and LeuD. It depends on [4Fe-4S] cluster as a cofactor.

It carries out the reaction (2R,3S)-3-isopropylmalate = (2S)-2-isopropylmalate. Its pathway is amino-acid biosynthesis; L-leucine biosynthesis; L-leucine from 3-methyl-2-oxobutanoate: step 2/4. Catalyzes the isomerization between 2-isopropylmalate and 3-isopropylmalate, via the formation of 2-isopropylmaleate. The protein is 3-isopropylmalate dehydratase large subunit of Acinetobacter baumannii (strain ACICU).